Reading from the N-terminus, the 401-residue chain is Splicing factor 45 (401 aa).

At serine 2 the chain carries N-acetylserine. Serine 2 is modified (phosphoserine). A Glycyl lysine isopeptide (Lys-Gly) (interchain with G-Cter in SUMO2) cross-link involves residue lysine 15. Lysine 21 is modified (N6-acetyllysine). Glycyl lysine isopeptide (Lys-Gly) (interchain with G-Cter in SUMO2) cross-links involve residues lysine 24 and lysine 33. The residue at position 41 (lysine 41) is an N6-acetyllysine; alternate. A Glycyl lysine isopeptide (Lys-Gly) (interchain with G-Cter in SUMO2); alternate cross-link involves residue lysine 41. Basic and acidic residues predominate over residues 57–68; it reads LKRGGSSDDRQI. 2 disordered regions span residues 57–84 and 114–233; these read LKRGGSSDDRQIVDTPPHVAAGLKDPVP and RQRE…FLAN. A Glycyl lysine isopeptide (Lys-Gly) (interchain with G-Cter in SUMO2) cross-link involves residue lysine 58. Position 71 is a phosphothreonine (threonine 71). Basic and acidic residues predominate over residues 114–153; the sequence is RQREERQRQRELERQKEIEEREKRRKDRHEASGFARRPDP. Residues serine 155 and serine 169 each carry the phosphoserine modification. Residues 182-200 show a composition bias toward basic and acidic residues; that stretch reads VEKDKELPRDFPYEEDSRP. Serine 222 carries the phosphoserine modification. The G-patch domain maps to 235 to 283; sequence GGTVAHKIMQKYGFREGQGLGKHEQGLSTALSVEKTSKRGGKIIVGDAT. Threonine 237 carries the post-translational modification Phosphothreonine. Lysine 256 is covalently cross-linked (Glycyl lysine isopeptide (Lys-Gly) (interchain with G-Cter in SUMO2)). Serine 266 carries the phosphoserine modification. Lysine 276 participates in a covalent cross-link: Glycyl lysine isopeptide (Lys-Gly) (interchain with G-Cter in SUMO2). Serine 291 and serine 293 each carry phosphoserine. An RRM domain is found at 306 to 385; the sequence is VVLLRNMVGA…YFGGRVVKAC (80 aa).

Binds SXL. Associates with the spliceosome. Interacts with SF3B1, SF1 and U2AF2.

Its subcellular location is the nucleus. Its function is as follows. Splice factor that binds to the single-stranded 3'AG at the exon/intron border and promotes its utilization in the second catalytic step. Involved in the regulation of alternative splicing and the utilization of cryptic splice sites. Promotes the utilization of a cryptic splice site created by the beta-110 mutation in the HBB gene. The resulting frameshift leads to sickle cell anemia. This is Splicing factor 45 (RBM17) from Homo sapiens (Human).